The following is a 647-amino-acid chain: Protein RAD61 (647 aa).

The tract at residues 1–90 is disordered; that stretch reads MRAYGKRGPV…QLDSKRNDQN (90 aa). A compositionally biased stretch (polar residues) spans 66 to 82; sequence DSSSSFDGANEKPSSQL.

The protein resides in the nucleus. Involved in resistance to ionizing radiation. The protein is Protein RAD61 (RAD61) of Saccharomyces cerevisiae (strain ATCC 204508 / S288c) (Baker's yeast).